A 407-amino-acid chain; its full sequence is Argininosuccinate synthase (407 aa).

ATP is bound by residues 16-24 (AYSGGLDTS) and A44. L-citrulline-binding residues include Y96 and S101. G126 lines the ATP pocket. Positions 128, 132, and 133 each coordinate L-aspartate. An L-citrulline-binding site is contributed by N132. Residues R136, S185, S194, E270, and Y282 each coordinate L-citrulline.

Belongs to the argininosuccinate synthase family. Type 1 subfamily. In terms of assembly, homotetramer.

The protein localises to the cytoplasm. It carries out the reaction L-citrulline + L-aspartate + ATP = 2-(N(omega)-L-arginino)succinate + AMP + diphosphate + H(+). It functions in the pathway amino-acid biosynthesis; L-arginine biosynthesis; L-arginine from L-ornithine and carbamoyl phosphate: step 2/3. This is Argininosuccinate synthase from Shewanella loihica (strain ATCC BAA-1088 / PV-4).